We begin with the raw amino-acid sequence, 864 residues long: MIYSENTDEKSNQHTNNLYKPCEIENKWQEIWDKENLYKTDDKSSKKEKFYALSMFPYPSGNLHMGHVRNYVITDLIARFQRFQGKSLLHPMGWDAFGLPAENAAIERGINPNDWTKKNIAHMKSQLKLLGLSVDWDKEFATCDENYYLWTQFLFLELHKSGLVYQKESEVNWDPIDNTVLANEQVDSEGKSWRSGAKVEKKLLTQWFLKITNYTEELLQDLEKLSEWPERVKIMQENWIGKSKGANIIFKINEFENEKIKVFTTRPDTLFGVTYIAISINNPLINKISDNEILSKLENLKIYLKKNQDKDQKKIGIPTNLKAINPINSNEIPIWIASYVLDEYGTGAVMGVPAHDQRDFEFAKINFIDIKQVIIKDKDNDKSTFKLKNAFTDNGFLINSNNFNGLCNNDAKKQILEQGKINGWAEEEIHYRLRDWLISRQRYWGCPIPIIKCNNCGSIPVNKKNLPVKLPKEIEISSNKINSLGSYKDWVKTTCPKCGNLASRETDTMDTFMCSSWYFLRYPSSKCKTKPFEKDNVNKWLPVDQYVGGVEHAILHLLYARFLTKALRDNNLFDIDEPFKKLLTQGMVQAAAYKNTKTGKYISPKDIKDFNNPTDPNDDSKLEVLFEKMSKSKYNGIDPESVIKKYGADTARMFILFKAPPEKDLEWGDSDVEGQYRFLCRIWKLFLDYRNNESWDNQKNYNREKENSLTKSINIAIKEISNDIKNNQFNTAISELMKFYNSLSSSMIYVNKDLRKDAFKKFCILLAPFAPHIAEEIWNLIGYQKSVHLERWPIFNEDALKEDCYELVIQINGKVRDKINVGIDISEDQIKQKTLTRPNVRKWIDQKTIRKIIIVKGKIMNIVV.

The 'HIGH' region signature appears at 57-67 (PYPSGNLHMGH). The 'KMSKS' region motif lies at 628–632 (KMSKS). Lysine 631 is an ATP binding site.

The protein belongs to the class-I aminoacyl-tRNA synthetase family.

The protein resides in the cytoplasm. The enzyme catalyses tRNA(Leu) + L-leucine + ATP = L-leucyl-tRNA(Leu) + AMP + diphosphate. In Prochlorococcus marinus (strain MIT 9515), this protein is Leucine--tRNA ligase.